A 192-amino-acid polypeptide reads, in one-letter code: UPF0149 protein YE3397 (192 aa).

The protein belongs to the UPF0149 family.

In Yersinia enterocolitica serotype O:8 / biotype 1B (strain NCTC 13174 / 8081), this protein is UPF0149 protein YE3397.